The primary structure comprises 33 residues: rho operon leader peptide (33 aa).

The segment covering 1–25 has biased composition (polar residues); the sequence is MRSEQISGSSLNPSCRFSSAYSPVT. Positions 1–33 are disordered; that stretch reads MRSEQISGSSLNPSCRFSSAYSPVTRQRKDMSR.

The chain is rho operon leader peptide (rhoL) from Escherichia coli O157:H7.